Reading from the N-terminus, the 170-residue chain is Peptide deformylase (170 aa).

Fe cation-binding residues include cysteine 91 and histidine 133. The active site involves glutamate 134. Histidine 137 is a Fe cation binding site.

This sequence belongs to the polypeptide deformylase family. It depends on Fe(2+) as a cofactor.

The enzyme catalyses N-terminal N-formyl-L-methionyl-[peptide] + H2O = N-terminal L-methionyl-[peptide] + formate. Its function is as follows. Removes the formyl group from the N-terminal Met of newly synthesized proteins. Requires at least a dipeptide for an efficient rate of reaction. N-terminal L-methionine is a prerequisite for activity but the enzyme has broad specificity at other positions. The chain is Peptide deformylase from Histophilus somni (strain 129Pt) (Haemophilus somnus).